The primary structure comprises 341 residues: GTP-binding protein REM 2 (341 aa).

Acidic residues predominate over residues 1-13; sequence MHTDLDTDMDMDT. Disordered stretches follow at residues 1-71 and 84-106; these read MHTD…GSMP and VDELDWPPQASPSGSSDSLGSGE. A compositionally biased stretch (polar residues) spans 18 to 30; it reads LCSSSSRQASPLG. At S27 the chain carries Phosphoserine. Over residues 90 to 106 the composition is skewed to low complexity; that stretch reads PPQASPSGSSDSLGSGE. GTP contacts are provided by residues 122-129, 230-233, and 261-262; these read GESGVGKS, NKSD, and AA. The interval 282–309 is disordered; the sequence is RGRGHAGGQRPEPSSPDGPAPPTRRESL. Pro residues predominate over residues 294 to 303; it reads PSSPDGPAPP. Position 296 is a phosphoserine (S296).

The protein belongs to the small GTPase superfamily. RGK family.

The protein localises to the cell membrane. Functionally, binds GTP saturably and exhibits a low intrinsic rate of GTP hydrolysis. This is GTP-binding protein REM 2 (Rem2) from Mus musculus (Mouse).